Reading from the N-terminus, the 807-residue chain is Probable phosphoketolase (807 aa).

The protein belongs to the XFP family. Thiamine diphosphate is required as a cofactor.

The sequence is that of Probable phosphoketolase from Mesorhizobium japonicum (strain LMG 29417 / CECT 9101 / MAFF 303099) (Mesorhizobium loti (strain MAFF 303099)).